Here is a 34-residue protein sequence, read N- to C-terminus: Non-toxic venom protein (34 aa).

The region spanning lysine 1–aspartate 34 is the LCN-type CS-alpha/beta domain.

In terms of tissue distribution, expressed by the venom gland.

The protein localises to the secreted. Functionally, does not cause symptoms of intoxication, paralysis or death in insects (A.domestica). This Rhopalurus junceus (Caribbean blue scorpion) protein is Non-toxic venom protein.